The following is a 242-amino-acid chain: Phosphatidylcholine synthase (242 aa).

The Cytoplasmic portion of the chain corresponds to 1-15 (MKIFNYKRVPYAEMR). Residues 16 to 36 (AFSVHILTASGSFLAFLGVVA) form a helical membrane-spanning segment. Topologically, residues 37 to 41 (AAEHR) are periplasmic. A helical membrane pass occupies residues 42–62 (FIDMFWWLGLALLVDGIDGPI). Over 63–76 (ARKVRVKEVLPNWS) the chain is Cytoplasmic. Residues 77–97 (GDTLDNIIDYVTYVLLPAFAL) traverse the membrane as a helical segment. Residues 98–100 (YQS) lie on the Periplasmic side of the membrane. A helical transmembrane segment spans residues 101 to 121 (GMIGEPWSFVAAGMIVVSSAI). Over 122 to 133 (YYADMGMKTDEY) the chain is Cytoplasmic. Residues 134–154 (FFSGFPVVWNMIVFTLFVIDA) form a helical membrane-spanning segment. The Periplasmic segment spans residues 155-159 (SATTA). The chain crosses the membrane as a helical span at residues 160–180 (LTVVIVSVVLTFLPINFLHPV). At 181 to 187 (RVKRLRP) the chain is on the cytoplasmic side. The chain crosses the membrane as a helical span at residues 188 to 208 (LNLGVFFLWSALGIFSLLMHF). Residues 209 to 214 (DTPEWA) are Periplasmic-facing. A helical membrane pass occupies residues 215–235 (LILFIVTGAYLYVIGAVLQFF). Residues 236–242 (PALGRET) lie on the Cytoplasmic side of the membrane.

This sequence belongs to the CDP-alcohol phosphatidyltransferase class-I family. Requires Mn(2+) as cofactor.

It localises to the cell inner membrane. The enzyme catalyses a CDP-1,2-diacyl-sn-glycerol + choline = a 1,2-diacyl-sn-glycero-3-phosphocholine + CMP + H(+). Functionally, condenses choline with CDP-diglyceride to produce phosphatidylcholine and CMP. The polypeptide is Phosphatidylcholine synthase (Rhizobium johnstonii (strain DSM 114642 / LMG 32736 / 3841) (Rhizobium leguminosarum bv. viciae)).